A 189-amino-acid polypeptide reads, in one-letter code: Elongation factor P (189 aa).

The protein belongs to the elongation factor P family.

Its subcellular location is the cytoplasm. It functions in the pathway protein biosynthesis; polypeptide chain elongation. Involved in peptide bond synthesis. Stimulates efficient translation and peptide-bond synthesis on native or reconstituted 70S ribosomes in vitro. Probably functions indirectly by altering the affinity of the ribosome for aminoacyl-tRNA, thus increasing their reactivity as acceptors for peptidyl transferase. This is Elongation factor P from Pseudomonas entomophila (strain L48).